The chain runs to 378 residues: Ribosomal RNA large subunit methyltransferase G (378 aa).

Belongs to the methyltransferase superfamily. RlmG family.

Its subcellular location is the cytoplasm. The enzyme catalyses guanosine(1835) in 23S rRNA + S-adenosyl-L-methionine = N(2)-methylguanosine(1835) in 23S rRNA + S-adenosyl-L-homocysteine + H(+). Its function is as follows. Specifically methylates the guanine in position 1835 (m2G1835) of 23S rRNA. In Shigella boydii serotype 4 (strain Sb227), this protein is Ribosomal RNA large subunit methyltransferase G.